A 113-amino-acid polypeptide reads, in one-letter code: uncharacterized protein (113 aa).

2 disordered regions span residues 1 to 22 (MGEH…PLAQ) and 90 to 113 (DGRH…SDDL). Residues 90–99 (DGRHTTESSF) are compositionally biased toward basic and acidic residues. The segment covering 100 to 113 (EHSSPSRSPQSDDL) has biased composition (low complexity).

This is an uncharacterized protein from Mycobacterium tuberculosis (strain CDC 1551 / Oshkosh).